A 161-amino-acid polypeptide reads, in one-letter code: MKYDTSDLCDIYHEEVNVVEPLFSNFGGRTSFGGKITTVKCFEDNGLLFDLLEENGLGRVLVVDGGGSVRRALINAELADLALKNEWEGIVVYGAVRQVDELAELDIGIQAMAAIPVGAADEGIGESDIRVNFGGVTFFSGDHLYADNTGIILSEEPLDIE.

It belongs to the RraA family. In terms of assembly, homotrimer. Binds to both RNA-binding sites in the C-terminal region of Rne and to RhlB.

The protein localises to the cytoplasm. Globally modulates RNA abundance by binding to RNase E (Rne) and regulating its endonucleolytic activity. Can modulate Rne action in a substrate-dependent manner by altering the composition of the degradosome. Modulates RNA-binding and helicase activities of the degradosome. The polypeptide is Regulator of ribonuclease activity A (Yersinia enterocolitica serotype O:8 / biotype 1B (strain NCTC 13174 / 8081)).